The sequence spans 130 residues: Lipoprotein LpqS (130 aa).

Positions 1 to 23 (MVWMRSAIVAVALGVTVAAVAAA) are cleaved as a signal peptide. A lipid anchor (N-palmitoyl cysteine) is attached at cysteine 24. The S-diacylglycerol cysteine moiety is linked to residue cysteine 24.

The protein localises to the cell membrane. Functionally, may play an essential role in M.tuberculosis replication and survival inside the host cell. The polypeptide is Lipoprotein LpqS (Mycobacterium tuberculosis (strain ATCC 25618 / H37Rv)).